The primary structure comprises 505 residues: SusD-like protein P2 (505 aa).

The signal sequence occupies residues 1–17 (MKKYKITFIVLLLTLVG). A lipid anchor (N-palmitoyl cysteine) is attached at cysteine 18. The S-diacylglycerol cysteine moiety is linked to residue cysteine 18.

The protein belongs to the SusD family.

The protein resides in the cell outer membrane. In terms of biological role, polysaccharide-binding protein probably involved in ulvan degradation. Ulvan is the main polysaccharide component of the Ulvales (green seaweed) cell wall. It is composed of disaccharide building blocks comprising 3-sulfated rhamnose (Rha3S) linked to D-glucuronic acid (GlcA), L-iduronic acid (IduA), or D-xylose (Xyl). The SusD-like protein may mediate ulvan oligomer-binding before transport in the periplasm for further degradation. In Formosa agariphila (strain DSM 15362 / KCTC 12365 / LMG 23005 / KMM 3901 / M-2Alg 35-1), this protein is SusD-like protein P2.